The chain runs to 215 residues: Cytochrome b6 (215 aa).

Residues 32–52 (IFHCLGGITLTCFLVQVATGF) traverse the membrane as a helical segment. Cys-35 serves as a coordination point for heme c. 2 residues coordinate heme b: His-86 and His-100. The next 3 helical transmembrane spans lie at 90–110 (ASMMVLMMILHVFRVYLTGGF), 116–136 (LTWVTGVVLAVLTASFGVTGY), and 186–206 (LHTFVLPLLTAVFMLMHFSMI). 2 residues coordinate heme b: His-187 and His-202.

It belongs to the cytochrome b family. PetB subfamily. As to quaternary structure, the 4 large subunits of the cytochrome b6-f complex are cytochrome b6, subunit IV (17 kDa polypeptide, PetD), cytochrome f and the Rieske protein, while the 4 small subunits are PetG, PetL, PetM and PetN. The complex functions as a dimer. The cofactor is heme b. Heme c is required as a cofactor.

Its subcellular location is the plastid. The protein resides in the chloroplast thylakoid membrane. Component of the cytochrome b6-f complex, which mediates electron transfer between photosystem II (PSII) and photosystem I (PSI), cyclic electron flow around PSI, and state transitions. In Nymphaea alba (White water-lily), this protein is Cytochrome b6.